The primary structure comprises 518 residues: Probable malate:quinone oxidoreductase (518 aa).

The disordered stretch occupies residues 495 to 518; sequence GAIPATTDGQSTAGTEHTPTAATV. The segment covering 501–518 has biased composition (polar residues); that stretch reads TDGQSTAGTEHTPTAATV.

Belongs to the MQO family. FAD serves as cofactor.

The catalysed reaction is (S)-malate + a quinone = a quinol + oxaloacetate. The protein operates within carbohydrate metabolism; tricarboxylic acid cycle; oxaloacetate from (S)-malate (quinone route): step 1/1. The chain is Probable malate:quinone oxidoreductase from Mycolicibacterium gilvum (strain PYR-GCK) (Mycobacterium gilvum (strain PYR-GCK)).